Consider the following 824-residue polypeptide: MAGEGVEMSEEEGAFEAFVCPLTKQVMRDPVTIETGQTFEREAILKWFRECRDNGRRPTCPLTQRELRDTEVSPSVALRSVIHEWRARNEEKDLDRACASLVGGFAGHAGDEEEEESALRALVHVSQICQRSAASKDLVRRRGVLRAVAEMLKSGSRRLRLKSLQVLRVLVEDNDDNKEELGKGDTIRTIIKFLSNEHVQERELAVSLLHELSGHEPTCERIGAVYGAILLLVGMGSSKSESAVAVDKAESTLRNLDRFDANVKQMADNGRLQPLLTRLLRGEPDTRVAMADYLGELALANDDKAAVAEQAGPLLVGMLRTGATPAKEATLKALREISSSEASAKLLLQRAGVLPPLVNDVLFSTGHLPMKLKELAATILANLVASGADFRSIPLDDDEDDDGGGGGRGRRRTLLSEDVVHSQLHLISNTGPAIGCRLLSVLAGLTSSRATVADVVAAVKSSGATISLIQFIEAAHRDIRVESLKLLRNLAPYMGAELADALGGSLSSLLRAISSDGGGVTEEQAAAVGLLGDLPEGDSSLTRQLFDLGAFRALAPKLAELRRGTIRGGNRYVTPLTEGVVKVMYRVTCALEEDAEYVEFAREAGLAPLFVELLHTNGMDTVQLYSAMALEKLSLQSSHLTAIPAPPSPPAGFGCACLGRRPAAAAVPAGVCRVHGGFCSLRETFCLAQADGGKAVERLVACLDHLDGRVVEAALAALSTLVCDGVDAREGVVVLGEADGLRPVVDIMVESRTEALQRRAVWAVERILRVEEIAGEVAADQTVASALVEAYRNGDPRTRQTAERALRHLDRIPNFSAAFQSKRS.

One can recognise a U-box domain in the interval 13–92 (GAFEAFVCPL…HEWRARNEEK (80 aa)). ARM repeat units lie at residues 133–172 (AASK…VLVE), 175–214 (DDNK…ELSG), 217–258 (PTCE…NLDR), 260–299 (DANV…ELAL), 300–339 (ANDD…EISS), 341–385 (EASA…NLVA), 396–435 (DDDE…PAIG), 441–481 (VLAG…DIRV), and 486–525 (LLRN…EEQA).

Interacts with BZR1, BZR2, BZR3 and GSK2. In terms of processing, auto-ubiquitinated. Phosphorylated by GSK2. Phosphorylation of PUB24 increases its cellular stability.

Its subcellular location is the cytoplasm. The protein resides in the cytosol. It is found in the nucleus. The catalysed reaction is S-ubiquitinyl-[E2 ubiquitin-conjugating enzyme]-L-cysteine + [acceptor protein]-L-lysine = [E2 ubiquitin-conjugating enzyme]-L-cysteine + N(6)-ubiquitinyl-[acceptor protein]-L-lysine.. Its pathway is protein modification; protein ubiquitination. E3 ubiquitin-protein ligase that functions as a negative regulator of brassinosteroid (BR) signaling. Targets BZR1, a positive regulator of BR signaling pathway, and promotes its degradation via the ubiquitin-26S proteasome pathway. The chain is U-box domain-containing protein 24 from Oryza sativa subsp. japonica (Rice).